Consider the following 303-residue polypeptide: Putative S-adenosyl-L-methionine-dependent methyltransferase ML2020 (303 aa).

S-adenosyl-L-methionine-binding positions include D130 and 159–160 (DL).

The protein belongs to the UPF0677 family.

Exhibits S-adenosyl-L-methionine-dependent methyltransferase activity. The polypeptide is Putative S-adenosyl-L-methionine-dependent methyltransferase ML2020 (Mycobacterium leprae (strain TN)).